The sequence spans 79 residues: Protein OPG081 (79 aa).

At 1–8 (MVDAITVL) the chain is on the intravirion side. A helical membrane pass occupies residues 9-29 (TAIGITVLMLLMVISGAAMIV). At 30–47 (KELNPNDIFTMQSLKFNR) the chain is on the virion surface side. Residues 48–68 (AVTIFKYIGLFIYIPGTIILY) form a helical membrane-spanning segment. Topologically, residues 69 to 79 (ATYVKSLLMKS) are intravirion.

The protein belongs to the orthopoxvirus OPG081 family.

Its subcellular location is the virion membrane. Its function is as follows. Envelope protein. This chain is Protein OPG081 (OPG081), found in Vaccinia virus (strain Copenhagen) (VACV).